The primary structure comprises 307 residues: Cytochrome c1 1, heme protein, mitochondrial (307 aa).

A mitochondrion-targeting transit peptide spans M1 to A64. At D65–M270 the chain is on the mitochondrial intermembrane side. The region spanning A90–A246 is the Cytochrome c domain. Heme c is bound by residues C103, C106, H107, and M226. The helical transmembrane segment at G271–Y288 threads the bilayer. At R289–N307 the chain is on the mitochondrial matrix side.

Belongs to the cytochrome c family. In terms of assembly, component of the ubiquinol-cytochrome c oxidoreductase (cytochrome b-c1 complex, complex III, CIII), a multisubunit enzyme composed of 10 subunits. The complex is composed of 3 respiratory subunits cytochrome b (MT-CYB), cytochrome c1 (CYC1-1 or CYC1-2) and Rieske protein (UCR1-1 or UCR1-2), 2 core protein subunits MPPalpha1 (or MPPalpha2) and MPPB, and 5 low-molecular weight protein subunits QCR7-1 (or QCR7-2), UCRQ-1 (or UCRQ-2), QCR9, UCRY and probably QCR6-1 (or QCR6-2). The complex exists as an obligatory dimer and forms supercomplexes (SCs) in the inner mitochondrial membrane with NADH-ubiquinone oxidoreductase (complex I, CI), resulting in different assemblies (supercomplexes SCI(1)III(2) and SCI(2)III(4)). Post-translationally, binds 1 heme c group covalently per subunit.

The protein resides in the mitochondrion inner membrane. Its function is as follows. Component of the ubiquinol-cytochrome c oxidoreductase, a multisubunit transmembrane complex that is part of the mitochondrial electron transport chain which drives oxidative phosphorylation. The respiratory chain contains 3 multisubunit complexes succinate dehydrogenase (complex II, CII), ubiquinol-cytochrome c oxidoreductase (cytochrome b-c1 complex, complex III, CIII) and cytochrome c oxidase (complex IV, CIV), that cooperate to transfer electrons derived from NADH and succinate to molecular oxygen, creating an electrochemical gradient over the inner membrane that drives transmembrane transport and the ATP synthase. The cytochrome b-c1 complex catalyzes electron transfer from ubiquinol to cytochrome c, linking this redox reaction to translocation of protons across the mitochondrial inner membrane, with protons being carried across the membrane as hydrogens on the quinol. In the process called Q cycle, 2 protons are consumed from the matrix, 4 protons are released into the intermembrane space and 2 electrons are passed to cytochrome c. Cytochrome c1 is a catalytic core subunit containing a c-type heme. It transfers electrons from the [2Fe-2S] iron-sulfur cluster of the Rieske protein to cytochrome c. This chain is Cytochrome c1 1, heme protein, mitochondrial (CYC1-1), found in Arabidopsis thaliana (Mouse-ear cress).